Consider the following 281-residue polypeptide: 2-dehydro-3-deoxyphosphooctonate aldolase (281 aa).

This sequence belongs to the KdsA family.

The protein localises to the cytoplasm. It carries out the reaction D-arabinose 5-phosphate + phosphoenolpyruvate + H2O = 3-deoxy-alpha-D-manno-2-octulosonate-8-phosphate + phosphate. It functions in the pathway carbohydrate biosynthesis; 3-deoxy-D-manno-octulosonate biosynthesis; 3-deoxy-D-manno-octulosonate from D-ribulose 5-phosphate: step 2/3. It participates in bacterial outer membrane biogenesis; lipopolysaccharide biosynthesis. The sequence is that of 2-dehydro-3-deoxyphosphooctonate aldolase from Azotobacter vinelandii (strain DJ / ATCC BAA-1303).